Consider the following 314-residue polypeptide: Olfactory receptor 5P66 (314 aa).

The Extracellular portion of the chain corresponds to 1–28; it reads MAFLENGNHTAVSEFILLGLTDDPVLRI. Asn8 carries N-linked (GlcNAc...) asparagine glycosylation. Residues 29–49 traverse the membrane as a helical segment; it reads VLFTIILCIYLVTVSGNLSTI. The Cytoplasmic portion of the chain corresponds to 50–57; it reads LLIRVSSQ. Residues 58–78 traverse the membrane as a helical segment; sequence LHHPMYFFLSHLASADIGLSS. Topologically, residues 79–102 are extracellular; it reads SVTPNMLVNFLVERSTISYLGCGI. An intrachain disulfide couples Cys100 to Cys192. The chain crosses the membrane as a helical span at residues 103–123; it reads QLSSAALFGATECFLLAAMAY. The Cytoplasmic segment spans residues 124–136; that stretch reads DRFMAICNPLLYS. A helical transmembrane segment spans residues 137–157; it reads TKMSTKVCVQLIVGSYIAGFL. The Extracellular segment spans residues 158–199; sequence NASSFLLSFFSLLFCGQNIINDFFCDFAPLAELSCSDVSVFV. The helical transmembrane segment at 200-220 threads the bilayer; that stretch reads VVISFSAGTVTMLTVFVIAIS. The Cytoplasmic segment spans residues 221–240; the sequence is YSYILITILKMRSTEGRQKA. A helical transmembrane segment spans residues 241–261; that stretch reads FSTCTSHLTAVTLFYGTVTFI. Topologically, residues 262–274 are extracellular; sequence YVMPKSSYSMDQN. Residues 275–295 traverse the membrane as a helical segment; sequence KIISVFYMVVVPMLNPLIYSL. Over 296 to 314 the chain is Cytoplasmic; the sequence is RNNEIKGALKRHFDRKTFS.

It belongs to the G-protein coupled receptor 1 family.

Its subcellular location is the cell membrane. Its function is as follows. Potential odorant receptor. The protein is Olfactory receptor 5P66 of Mus musculus (Mouse).